Consider the following 203-residue polypeptide: MKKLAITCALLSGMVVSQVWADAASDLKSRLDKVSSFHASFTQKVTDGSGNAVQDGQGDLWVKRPNLFNWHMTQPDESVLVSDGKTLWFYNPFVEQATATWLKDATSNTPFMLIARNQSSDWQQYNIKQNGDDFVLTPKSGSGNLKQFTINVGRDGTIHQFSAVEQDDQRSSYQLKSQQNGAVDASKFTFTPPKGVTVDDQRK.

An N-terminal signal peptide occupies residues 1–21 (MKKLAITCALLSGMVVSQVWA). The segment at 184–203 (DASKFTFTPPKGVTVDDQRK) is disordered.

Belongs to the LolA family. As to quaternary structure, monomer.

It is found in the periplasm. Functionally, participates in the translocation of lipoproteins from the inner membrane to the outer membrane. Only forms a complex with a lipoprotein if the residue after the N-terminal Cys is not an aspartate (The Asp acts as a targeting signal to indicate that the lipoprotein should stay in the inner membrane). This is Outer-membrane lipoprotein carrier protein from Klebsiella pneumoniae (strain 342).